The primary structure comprises 530 residues: Cytochrome P450 2U1 (530 aa).

4 helical membrane-spanning segments follow: residues 21–41, 99–119, 247–267, and 328–348; these read VRATGGALLLCLLAVLLGWVW, VYGNIFSFFIGHRLVVVLSDF, ICLHSQLFLINICPWFYYLPF, and LFYIIGDLFIAGTDTTTNSLL. A heme-binding site is contributed by Cys476. A helical membrane pass occupies residues 481–501; the sequence is LAKMELFLMFVSLMQTFTFAL.

It belongs to the cytochrome P450 family. Heme is required as a cofactor. In terms of tissue distribution, widely expressed. Expressed in heart, brain and liver.

It is found in the endoplasmic reticulum membrane. It localises to the microsome membrane. Its subcellular location is the mitochondrion inner membrane. It catalyses the reaction an omega-methyl-long-chain fatty acid + reduced [NADPH--hemoprotein reductase] + O2 = an omega-hydroxy-long-chain fatty acid + oxidized [NADPH--hemoprotein reductase] + H2O + H(+). The catalysed reaction is (5Z,8Z,11Z,14Z)-eicosatetraenoate + reduced [NADPH--hemoprotein reductase] + O2 = 19-hydroxy-(5Z,8Z,11Z,14Z)-eicosatetraenoate + oxidized [NADPH--hemoprotein reductase] + H2O + H(+). The enzyme catalyses (5Z,8Z,11Z,14Z)-eicosatetraenoate + reduced [NADPH--hemoprotein reductase] + O2 = 20-hydroxy-(5Z,8Z,11Z,14Z)-eicosatetraenoate + oxidized [NADPH--hemoprotein reductase] + H2O + H(+). It carries out the reaction N-[(5Z,8Z,11Z,14Z)-eicosatetraenoyl]-serotonin + reduced [NADPH--hemoprotein reductase] + O2 = 2-oxo-N-[(5Z,8Z,11Z,14Z)-eicosatetraenoyl]-serotonin + oxidized [NADPH--hemoprotein reductase] + H2O + H(+). Its function is as follows. A cytochrome P450 monooxygenase involved in the metabolism of arachidonic acid and its conjugates. Mechanistically, uses molecular oxygen inserting one oxygen atom into a substrate, and reducing the second into a water molecule, with two electrons provided by NADPH via cytochrome P450 reductase (CPR; NADPH-ferrihemoprotein reductase). Acts as an omega and omega-1 hydroxylase for arachidonic acid and possibly for other long chain fatty acids. May modulate the arachidonic acid signaling pathway and play a role in other fatty acid signaling processes. May down-regulate the biological activities of N-arachidonoyl-serotonin, an endocannabinoid that has anti-nociceptive effects through inhibition of fatty acid amide hydrolase FAAH, TRPV1 receptor and T-type calcium channels. Catalyzes C-2 oxidation of the indole ring of N-arachidonoyl-serotonin forming a less active product 2-oxo-N-arachidonoyl-serotonin. This Mus musculus (Mouse) protein is Cytochrome P450 2U1.